A 1150-amino-acid polypeptide reads, in one-letter code: ATP-dependent helicase/deoxyribonuclease subunit B (1150 aa).

Position 8 to 15 (8 to 15 (GRAGSGKS)) interacts with ATP. [4Fe-4S] cluster contacts are provided by cysteine 789, cysteine 1109, cysteine 1112, and cysteine 1118.

Belongs to the helicase family. AddB/RexB type 1 subfamily. Heterodimer of AddA and AddB. The cofactor is Mg(2+). It depends on [4Fe-4S] cluster as a cofactor.

In terms of biological role, the heterodimer acts as both an ATP-dependent DNA helicase and an ATP-dependent, dual-direction single-stranded exonuclease. Recognizes the chi site generating a DNA molecule suitable for the initiation of homologous recombination. The AddB subunit has 5' -&gt; 3' nuclease activity but not helicase activity. This is ATP-dependent helicase/deoxyribonuclease subunit B from Clostridium kluyveri (strain NBRC 12016).